Reading from the N-terminus, the 505-residue chain is Transcription factor VHR2 (505 aa).

Over residues Met1–His16 the composition is skewed to basic and acidic residues. Disordered stretches follow at residues Met1–Gly23, Asn105–Pro179, and Gln421–Ala460. The span at Pro133–Ser148 shows a compositional bias: low complexity. The segment covering Gln421–Ala443 has biased composition (polar residues).

It belongs to the VHR1 family.

The protein resides in the nucleus. Functionally, transcription factor that regulates ERG9, but seems to have a more global function in transcription. The polypeptide is Transcription factor VHR2 (VHR2) (Saccharomyces cerevisiae (strain ATCC 204508 / S288c) (Baker's yeast)).